Here is a 536-residue protein sequence, read N- to C-terminus: Arginine--tRNA ligase (536 aa).

Residues 119–129 (ANPTGFLHIGH) carry the 'HIGH' region motif.

This sequence belongs to the class-I aminoacyl-tRNA synthetase family. In terms of assembly, monomer.

Its subcellular location is the cytoplasm. It catalyses the reaction tRNA(Arg) + L-arginine + ATP = L-arginyl-tRNA(Arg) + AMP + diphosphate. The chain is Arginine--tRNA ligase from Mycoplasma mobile (strain ATCC 43663 / 163K / NCTC 11711) (Mesomycoplasma mobile).